The following is a 473-amino-acid chain: Photosystem II CP43 reaction center protein (473 aa).

The propeptide occupies 1 to 14 (MKTLYSRRRFYHVE). Residue Thr-15 is modified to N-acetylthreonine. Thr-15 bears the Phosphothreonine mark. Helical transmembrane passes span 69–93 (LFEV…PHLA), 134–155 (LLGP…KDRN), 178–200 (KALY…RKIT), 255–275 (KPFA…LSYS), and 291–312 (WFNN…ASQA). Glu-367 contacts [CaMn4O5] cluster. The chain crosses the membrane as a helical span at residues 447–471 (RARAAAAGFEKGIDRDFEPVLSMTP).

This sequence belongs to the PsbB/PsbC family. PsbC subfamily. As to quaternary structure, PSII is composed of 1 copy each of membrane proteins PsbA, PsbB, PsbC, PsbD, PsbE, PsbF, PsbH, PsbI, PsbJ, PsbK, PsbL, PsbM, PsbT, PsbX, PsbY, PsbZ, Psb30/Ycf12, at least 3 peripheral proteins of the oxygen-evolving complex and a large number of cofactors. It forms dimeric complexes. Binds multiple chlorophylls and provides some of the ligands for the Ca-4Mn-5O cluster of the oxygen-evolving complex. It may also provide a ligand for a Cl- that is required for oxygen evolution. PSII binds additional chlorophylls, carotenoids and specific lipids. is required as a cofactor.

It is found in the plastid. Its subcellular location is the chloroplast thylakoid membrane. One of the components of the core complex of photosystem II (PSII). It binds chlorophyll and helps catalyze the primary light-induced photochemical processes of PSII. PSII is a light-driven water:plastoquinone oxidoreductase, using light energy to abstract electrons from H(2)O, generating O(2) and a proton gradient subsequently used for ATP formation. The chain is Photosystem II CP43 reaction center protein from Solanum bulbocastanum (Wild potato).